Reading from the N-terminus, the 329-residue chain is Sex comb on midleg-like protein 1 (329 aa).

The tract at residues 125 to 194 (NEVHESFSYP…SDFSEHNYQP (70 aa)) is disordered. Ser138 is modified (phosphoserine). Over residues 159 to 168 (FRMEEYQRAE) the composition is skewed to basic and acidic residues. The residue at position 238 (Ser238) is a Phosphoserine. The region spanning 258–325 (WSVEAVVLFL…YYIDRLKQGK (68 aa)) is the SAM domain.

The protein belongs to the SCM family. Highly expressed in testis and pancreas. Preferentially expressed in the germ stem cells of testis.

The protein localises to the nucleus. Its function is as follows. Putative Polycomb group (PcG) protein. PcG proteins act by forming multiprotein complexes, which are required to maintain the transcriptionally repressive state of homeotic genes throughout development. May be involved in spermatogenesis during sexual maturation. This chain is Sex comb on midleg-like protein 1 (SCML1), found in Macaca mulatta (Rhesus macaque).